The sequence spans 94 residues: DNA-binding protein HU (94 aa).

Belongs to the bacterial histone-like protein family.

Histone-like DNA-binding protein which is capable of wrapping DNA to stabilize it, and thus to prevent its denaturation under extreme environmental conditions. This is DNA-binding protein HU (hup) from Xylella fastidiosa (strain 9a5c).